Reading from the N-terminus, the 314-residue chain is Methionyl-tRNA formyltransferase (314 aa).

Position 109–112 (109–112 (SLLP)) interacts with (6S)-5,6,7,8-tetrahydrofolate.

This sequence belongs to the Fmt family.

The catalysed reaction is L-methionyl-tRNA(fMet) + (6R)-10-formyltetrahydrofolate = N-formyl-L-methionyl-tRNA(fMet) + (6S)-5,6,7,8-tetrahydrofolate + H(+). Functionally, attaches a formyl group to the free amino group of methionyl-tRNA(fMet). The formyl group appears to play a dual role in the initiator identity of N-formylmethionyl-tRNA by promoting its recognition by IF2 and preventing the misappropriation of this tRNA by the elongation apparatus. In Syntrophomonas wolfei subsp. wolfei (strain DSM 2245B / Goettingen), this protein is Methionyl-tRNA formyltransferase.